We begin with the raw amino-acid sequence, 569 residues long: Proline--tRNA ligase (569 aa).

The protein belongs to the class-II aminoacyl-tRNA synthetase family. ProS type 1 subfamily. Homodimer.

The protein localises to the cytoplasm. The enzyme catalyses tRNA(Pro) + L-proline + ATP = L-prolyl-tRNA(Pro) + AMP + diphosphate. Its function is as follows. Catalyzes the attachment of proline to tRNA(Pro) in a two-step reaction: proline is first activated by ATP to form Pro-AMP and then transferred to the acceptor end of tRNA(Pro). As ProRS can inadvertently accommodate and process non-cognate amino acids such as alanine and cysteine, to avoid such errors it has two additional distinct editing activities against alanine. One activity is designated as 'pretransfer' editing and involves the tRNA(Pro)-independent hydrolysis of activated Ala-AMP. The other activity is designated 'posttransfer' editing and involves deacylation of mischarged Ala-tRNA(Pro). The misacylated Cys-tRNA(Pro) is not edited by ProRS. This is Proline--tRNA ligase from Endomicrobium trichonymphae.